A 207-amino-acid chain; its full sequence is Large ribosomal subunit protein uL3 (207 aa).

Residues 129 to 152 are disordered; that stretch reads AGGPAGHGSRFQRHPGSIGSNTTP.

The protein belongs to the universal ribosomal protein uL3 family. Part of the 50S ribosomal subunit. Forms a cluster with proteins L14 and L19.

Functionally, one of the primary rRNA binding proteins, it binds directly near the 3'-end of the 23S rRNA, where it nucleates assembly of the 50S subunit. This is Large ribosomal subunit protein uL3 from Leptospira biflexa serovar Patoc (strain Patoc 1 / ATCC 23582 / Paris).